The sequence spans 597 residues: Chaperonin 60 subunit beta 3, chloroplastic (597 aa).

Positions 1–20 are disordered; the sequence is MASTFSATSSMGSSLAPPSN. A chloroplast-targeting transit peptide spans 1-29; that stretch reads MASTFSATSSMGSSLAPPSNRLSSFVSIS. Phosphoserine occurs at positions 97 and 474. Positions 387 to 489 form a coiled coil; sequence STEEVVKKRV…KETLANDEEK (103 aa).

It belongs to the chaperonin (HSP60) family. As to quaternary structure, part of the Cpn60 complex composed of 7 alpha and 7 beta subunits. Can also form a complex composed of 14 beta subunits only. Both complexes show ATPase activity. The Cpn60 complex interacts with the Cpn10 complex.

It is found in the plastid. It localises to the chloroplast. Functionally, involved in protein assisted folding. The protein is Chaperonin 60 subunit beta 3, chloroplastic (CPN60B3) of Arabidopsis thaliana (Mouse-ear cress).